The sequence spans 293 residues: Probable metal transport system membrane protein CPn_0543/CP_0209/CPj0543/CpB0565 (293 aa).

A run of 7 helical transmembrane segments spans residues 12–32, 41–61, 68–88, 101–121, 140–160, 183–203, and 253–273; these read LLIL…GGVM, IVSI…LTLW, LSFF…LCIG, LIAM…SRLP, PSDL…VVLC, LWYF…IYVM, and FPVG…SLCV.

Belongs to the ABC-3 integral membrane protein family.

It is found in the cell inner membrane. Functionally, part of an ATP-driven transport system CPn_0541/CPn_0542/CPn_0543 for a metal. The polypeptide is Probable metal transport system membrane protein CPn_0543/CP_0209/CPj0543/CpB0565 (Chlamydia pneumoniae (Chlamydophila pneumoniae)).